Consider the following 425-residue polypeptide: Orexin/Hypocretin receptor type 1 (425 aa).

A disordered region spans residues 1-24 (MEPSATPGAQMGVPPGSREPSPVP). The Extracellular portion of the chain corresponds to 1-46 (MEPSATPGAQMGVPPGSREPSPVPPDYEDEFLRYLWRDYLYPKQYE). The interval 26-41 (DYEDEFLRYLWRDYLY) is required for response to orexin-A. Residues 47–67 (WVLIAAYVAVFVVALVGNTLV) form a helical membrane-spanning segment. At 68-82 (CLAVWRNHHMRTVTN) the chain is on the cytoplasmic side. Residues 83 to 105 (YFIVNLSLADVLVTAICLPASLL) form a helical membrane-spanning segment. Residues 106-119 (VDITESWLFGHALC) lie on the Extracellular side of the membrane. The cysteines at positions 119 and 202 are disulfide-linked. Residues 120-140 (KVIPYLQAVSVSVAVLTLSFI) form a helical membrane-spanning segment. At 141 to 160 (ALDRWYAICHPLLFKSTARR) the chain is on the cytoplasmic side. The chain crosses the membrane as a helical span at residues 161 to 182 (ARGSILGIWAVSLAIMVPQAAV). Residues 183–213 (MECSSVLPELANRTRLFSVCDERWADDLYPK) are Extracellular-facing. Asn194 carries an N-linked (GlcNAc...) asparagine glycan. Residues 214–235 (IYHSCFFIVTYLAPLGLMAMAY) form a helical membrane-spanning segment. The Cytoplasmic portion of the chain corresponds to 236-298 (FQIFRKLWGR…QMRARRKTAK (63 aa)). A helical membrane pass occupies residues 299–321 (MLMVVLLVFALCYLPISVLNVLK). Asn318 contributes to the suvorexant binding site. Residues 322-336 (RVFGMFRQASDREAV) lie on the Extracellular side of the membrane. The chain crosses the membrane as a helical span at residues 337–360 (YACFTFSHWLVYANSAANPIIYNF). At 361-425 (LSGKFREQFK…VLTSVTTVLP (65 aa)) the chain is on the cytoplasmic side.

This sequence belongs to the G-protein coupled receptor 1 family.

It is found in the cell membrane. Functionally, moderately selective excitatory receptor for orexin-A and, with a lower affinity, for orexin-B neuropeptide. Triggers an increase in cytoplasmic Ca(2+) levels in response to orexin-A binding. The chain is Orexin/Hypocretin receptor type 1 from Homo sapiens (Human).